A 641-amino-acid polypeptide reads, in one-letter code: Kelch-like protein 22 (641 aa).

The disordered stretch occupies residues 1–25; it reads MAEDLETMKPSQAPQQPSLPQGSSK. Low complexity predominate over residues 10 to 24; it reads PSQAPQQPSLPQGSS. In terms of domain architecture, BTB spans 50–117; that stretch reads FDVVLKVEGK…IYTSDLALSV (68 aa). Kelch repeat units lie at residues 299–349, 350–399, 400–446, 448–493, 494–544, and 545–593; these read CVVG…VLNN, FVYL…VLGD, FLYA…ALDG, MYVA…ALQE, KIYL…VLAK, and KIFV…VLTL.

Component of the BCR(KLHL22) E3 ubiquitin ligase complex, at least composed of cul3, klhl22 and rbx1.

It is found in the cytoplasm. Its subcellular location is the cytosol. The protein resides in the cytoskeleton. It localises to the microtubule organizing center. The protein localises to the centrosome. It is found in the spindle. Its subcellular location is the nucleus. The protein resides in the lysosome. The protein operates within protein modification; protein ubiquitination. Substrate-specific adapter of a BCR (BTB-CUL3-RBX1) E3 ubiquitin ligase complex. The BCR(KLHL22) ubiquitin ligase complex could mediate the monoubiquitination of PLK1 and regulate its activity in spindle assembly checkpoint (SAC) and chromosome segregation. The BCR(KLHL22) ubiquitin ligase complex may also be responsible for the ubiquitin-dependent proteasomal degradation of DEPDC5 and the activation of the TORC1 pathway. This Xenopus tropicalis (Western clawed frog) protein is Kelch-like protein 22 (klhl22).